Here is a 284-residue protein sequence, read N- to C-terminus: 4-diphosphocytidyl-2-C-methyl-D-erythritol kinase (284 aa).

Residue Lys-14 is part of the active site. ATP is bound at residue 98–108 (PMGGGLGGGSS). The active site involves Asp-140.

It belongs to the GHMP kinase family. IspE subfamily.

It carries out the reaction 4-CDP-2-C-methyl-D-erythritol + ATP = 4-CDP-2-C-methyl-D-erythritol 2-phosphate + ADP + H(+). It participates in isoprenoid biosynthesis; isopentenyl diphosphate biosynthesis via DXP pathway; isopentenyl diphosphate from 1-deoxy-D-xylulose 5-phosphate: step 3/6. Functionally, catalyzes the phosphorylation of the position 2 hydroxy group of 4-diphosphocytidyl-2C-methyl-D-erythritol. In Shewanella sp. (strain MR-4), this protein is 4-diphosphocytidyl-2-C-methyl-D-erythritol kinase.